The primary structure comprises 302 residues: Putative S-adenosyl-L-methionine-dependent methyltransferase MAB_4586c (302 aa).

S-adenosyl-L-methionine contacts are provided by residues Asp122 and 151-152 (DL).

Belongs to the UPF0677 family.

Its function is as follows. Exhibits S-adenosyl-L-methionine-dependent methyltransferase activity. The sequence is that of Putative S-adenosyl-L-methionine-dependent methyltransferase MAB_4586c from Mycobacteroides abscessus (strain ATCC 19977 / DSM 44196 / CCUG 20993 / CIP 104536 / JCM 13569 / NCTC 13031 / TMC 1543 / L948) (Mycobacterium abscessus).